Reading from the N-terminus, the 82-residue chain is Small ribosomal subunit protein bS16 (82 aa).

Belongs to the bacterial ribosomal protein bS16 family.

This Methylobacillus flagellatus (strain ATCC 51484 / DSM 6875 / VKM B-1610 / KT) protein is Small ribosomal subunit protein bS16.